The sequence spans 214 residues: Protein OPG176 (214 aa).

It belongs to the orthopoxvirus OPG176 family. Tetramer. Interacts with host MYD88, TRF4, TICAM2 and MAL.

Its function is as follows. BCL2-like protein which disrupts the host immune response by inhibiting the TLR4 signaling pathway leading to NF-kappa-B activation. Acts close to the plasma membrane and targets several host TIR-domain containing adapter proteins including MYD88, TIRAP, TRIF and TICAM2. In turn, blocks the host NF-kappa-B and TRIF-mediated IRF3 activation. The chain is Protein OPG176 (OPG176) from Homo sapiens (Human).